Reading from the N-terminus, the 243-residue chain is tRNA pseudouridine synthase A (243 aa).

Aspartate 51 acts as the Nucleophile in catalysis. Tyrosine 111 lines the substrate pocket.

It belongs to the tRNA pseudouridine synthase TruA family. As to quaternary structure, homodimer.

The enzyme catalyses uridine(38/39/40) in tRNA = pseudouridine(38/39/40) in tRNA. Functionally, formation of pseudouridine at positions 38, 39 and 40 in the anticodon stem and loop of transfer RNAs. This Neorickettsia sennetsu (strain ATCC VR-367 / Miyayama) (Ehrlichia sennetsu) protein is tRNA pseudouridine synthase A.